The following is a 132-amino-acid chain: Agouti-signaling protein (132 aa).

An N-terminal signal peptide occupies residues 1–22 (MDVTRLLLATLLVFLCFFTAYS). N39 is a glycosylation site (N-linked (GlcNAc...) asparagine). A disordered region spans residues 61–87 (QISRKEAEKKRSSKKEASMKKVARPRT). Residues 63–79 (SRKEAEKKRSSKKEASM) are compositionally biased toward basic and acidic residues. Intrachain disulfides connect C93–C108, C100–C114, C107–C125, C111–C132, and C116–C123. Residues 93–132 (CVATRDSCKSPAPACCDPCASCQCRFFRSACSCRVLSLNC) form the Agouti domain.

It is found in the secreted. In terms of biological role, involved in the regulation of melanogenesis. The binding of ASP to MC1R precludes alpha-MSH initiated signaling and thus blocks production of cAMP, leading to a down-regulation of eumelanogenesis (brown/black pigment) and thus increasing synthesis of pheomelanin (yellow/red pigment). The protein is Agouti-signaling protein (ASIP) of Macaca nigra (Celebes black macaque).